A 211-amino-acid polypeptide reads, in one-letter code: MLAHLRRVGLSLNRQIRSHIAFNSNDRMSSTCGLDTDIVWMDLEMTGLDIEKDKILEVACIITDQDLNVKSEGPCFAINHPQEVYDSMNEWCMKHHYNSGLIDRCKSSDVNLEEASNLVLSYLEKNIPKRACPLGGNSVYTDRLFIMKFMPLVDAYLHYRIVDVSTIKELAKRWHPAILDSAPKKSFTHRSLDDIRESIKELAYYKANLFK.

Positions 38 to 202 (IVWMDLEMTG…DDIRESIKEL (165 aa)) constitute an Exonuclease domain. Residue Tyr-159 is part of the active site.

It belongs to the oligoribonuclease family.

In terms of biological role, 3'-to-5' exoribonuclease specific for small oligoribonucleotides. This Drosophila melanogaster (Fruit fly) protein is Probable oligoribonuclease.